Reading from the N-terminus, the 113-residue chain is GFPVPDPFIWDASFKTFYDDLDNQHKQLFQAILTQGNVGGATAGDNAYACLVAHFLFEEAAMQVAKYGGYGAHKAAHEEFLGKVKGGSADAAYCKDWLTQHIKTIDFKYKGKL.

Residues His25, His54, Glu58, His73, His77, His101, and Asp106 each contribute to the Fe cation site.

Belongs to the hemerythrin family. As to quaternary structure, homotrimer.

Hemerythrin is a respiratory protein in blood cells of certain marine worms. The oxygen-binding site in each chain contains two iron atoms. This is Hemerythrin from Siphonosoma cumanense (Sipunculan worm).